The primary structure comprises 620 residues: 1-deoxy-D-xylulose-5-phosphate synthase (620 aa).

Thiamine diphosphate contacts are provided by residues His80 and 121 to 123 (GHS). Asp152 is a binding site for Mg(2+). Residues 153 to 154 (GA), Asn181, Tyr288, and Glu370 contribute to the thiamine diphosphate site. Asn181 provides a ligand contact to Mg(2+).

The protein belongs to the transketolase family. DXPS subfamily. In terms of assembly, homodimer. Requires Mg(2+) as cofactor. Thiamine diphosphate serves as cofactor.

It carries out the reaction D-glyceraldehyde 3-phosphate + pyruvate + H(+) = 1-deoxy-D-xylulose 5-phosphate + CO2. It functions in the pathway metabolic intermediate biosynthesis; 1-deoxy-D-xylulose 5-phosphate biosynthesis; 1-deoxy-D-xylulose 5-phosphate from D-glyceraldehyde 3-phosphate and pyruvate: step 1/1. Its function is as follows. Catalyzes the acyloin condensation reaction between C atoms 2 and 3 of pyruvate and glyceraldehyde 3-phosphate to yield 1-deoxy-D-xylulose-5-phosphate (DXP). In Pseudoalteromonas translucida (strain TAC 125), this protein is 1-deoxy-D-xylulose-5-phosphate synthase.